The following is a 364-amino-acid chain: PDZ and LIM domain protein 3 (364 aa).

The 84-residue stretch at 1-84 folds into the PDZ domain; sequence MPQTVILPGP…QLCLKIDRGE (84 aa). Residues serine 18, serine 93, and serine 264 each carry the phosphoserine modification. In terms of domain architecture, LIM zinc-binding spans 292–351; that stretch reads PLCDKCGSGIVGAVVKARDKYRHPECFVCADCNLNLKQKGYFFIEGELYCETHARARTKP.

As to quaternary structure, interacts with ACTN2. Forms a heterodimer with PDLIM4 (via LIM domain). Isoform 1 is highly expressed in differentiated skeletal muscle. Isoform 2 is heart-specific.

It localises to the cytoplasm. It is found in the myofibril. The protein localises to the sarcomere. The protein resides in the z line. In terms of biological role, may play a role in the organization of actin filament arrays within muscle cells. The protein is PDZ and LIM domain protein 3 (PDLIM3) of Homo sapiens (Human).